Consider the following 78-residue polypeptide: Omega-conotoxin-like SO-4 (78 aa).

Positions 1-22 are cleaved as a signal peptide; sequence MKLTCMVIVAVLLLTACQLITA. Positions 23 to 42 are excised as a propeptide; the sequence is DDSRGTQKHRSLRSTTKVSK. 3 cysteine pairs are disulfide-bonded: C46-C62, C53-C65, and C61-C72.

This sequence belongs to the conotoxin O1 superfamily. In terms of tissue distribution, expressed by the venom duct.

It localises to the secreted. In terms of biological role, omega-conotoxins act at presynaptic membranes, they bind and block voltage-gated calcium channels (Cav). This is Omega-conotoxin-like SO-4 (SO4) from Conus striatus (Striated cone).